Consider the following 615-residue polypeptide: Melanopsin-B (615 aa).

At 1 to 19 (MDMDRGFYRKVDVPDHAHY) the chain is on the extracellular side. A helical membrane pass occupies residues 20-40 (VIAFFVLIIGVVGVTGNALVM). Over 41–56 (YAFLCNKKLRTPPNYF) the chain is Cytoplasmic. A helical transmembrane segment spans residues 57-77 (IMNLAVSDFLMAITQSPIFFI). The Extracellular segment spans residues 78 to 93 (NSLFKEWIFGETGCRM). C91 and C169 form a disulfide bridge. The helical transmembrane segment at 94–114 (YAFCGALFGITSMINLLAISL) threads the bilayer. The Cytoplasmic segment spans residues 115–136 (DRYIVITKPPQAIRWVSGRRTM). A helical transmembrane segment spans residues 137 to 157 (VVILLVWLYSLAWSLAPLLGW). Over 158 to 189 (SSYIPEGLMTSCTWDYVTSTPANKGYTLMLCC) the chain is Extracellular. A helical transmembrane segment spans residues 190-210 (FVFFIPLGIISYCYLCMFLAI). Residues 211–244 (RSAGREIERLGTQVRKSTLMQQQTIKTEWKLTKV) lie on the Cytoplasmic side of the membrane. The chain crosses the membrane as a helical span at residues 245–265 (AFVVIIVYVHSWSPYACVTLI). Topologically, residues 266–279 (AWAGYGSHLSPYSK) are extracellular. The chain crosses the membrane as a helical span at residues 280 to 300 (AVPAVIAKASAIYNPFIYAII). K287 carries the post-translational modification N6-(retinylidene)lysine. Over 301-615 (HSKYRDTLAE…RNLEESFMAL (315 aa)) the chain is Cytoplasmic. Disordered stretches follow at residues 390-420 (LGRS…TVAD) and 465-502 (NKHP…QNHP). Residues 401-415 (AQQNRQTRSSDTLEQ) are compositionally biased toward polar residues. Positions 469–478 (NNNHKNHNNR) are enriched in basic residues.

Belongs to the G-protein coupled receptor 1 family. Opsin subfamily. Expressed in the inner nuclear layer of the retina, possibly in amacrine and ganglion cells. Expressed in a subpopulation of neurons in the dorsal habenula.

The protein localises to the cell membrane. Photoreceptor implicated in non-image-forming responses to light. The protein is Melanopsin-B (opn4b) of Gadus morhua (Atlantic cod).